Consider the following 243-residue polypeptide: DNA repair protein RecO (243 aa).

The protein belongs to the RecO family.

Functionally, involved in DNA repair and RecF pathway recombination. The polypeptide is DNA repair protein RecO (Azoarcus sp. (strain BH72)).